The primary structure comprises 612 residues: E3 ubiquitin-protein ligase synoviolin (612 aa).

The Cytoplasmic segment spans residues 1–4; the sequence is MFRT. Residues 1–251 are involved in FAM8A1 interaction; sequence MFRTAVMMAA…LFAIRPMYLA (251 aa). Residues 5–25 form a helical membrane-spanning segment; the sequence is AVMMAASLALTGAVVAHAYYL. The interval 21–42 is interaction with SEL1L; the sequence is HAYYLKHQFYPTVVYLTKSSPS. Residues 26–41 are Lumenal-facing; sequence KHQFYPTVVYLTKSSP. Residues 42–62 traverse the membrane as a helical segment; that stretch reads SMAVLYIQAFVLVFLLGKVMG. Residues 63–98 lie on the Cytoplasmic side of the membrane; the sequence is KVFFGQLRAAEMEHLLERSWYAVTETCLAFTVFRDD. Residues 99–119 form a helical membrane-spanning segment; sequence FSPRFVALFTLLLFLKCFHWL. The Lumenal segment spans residues 120–140; it reads AEDRVDFMERSPNISWLFHCR. A helical membrane pass occupies residues 141–161; that stretch reads IVSLMFLLGILDFLFVSHAYH. Residues 162–169 are Cytoplasmic-facing; the sequence is SILTRGAS. The chain crosses the membrane as a helical span at residues 170-190; it reads VQLVFGFEYAILMTMVLTIFI. The Lumenal segment spans residues 191–224; it reads KYVLHSVDLQSENPWDNKAVYMLYTELFTGFIKV. A helical transmembrane segment spans residues 225-245; sequence LLYMAFMTIMIKVHTFPLFAI. Residues 236–270 are interaction with p53/TP53; the sequence is KVHTFPLFAIRPMYLAMRQFKKAVTDAIMSRRAIR. Over 246 to 612 the chain is Cytoplasmic; the sequence is RPMYLAMRQF…LQKLESPVAH (367 aa). Zn(2+) is bound by residues C291, C294, C307, H309, H312, C315, C326, and C329. Residues 291–330 form an RING-type; atypical zinc finger; it reads CIICREEMVTGAKRLPCNHIFHTSCLRSWFQRQQTCPTCR. 2 disordered regions span residues 337–375 and 393–449; these read SLPA…GLLP and PVPP…PGFP. Composition is skewed to pro residues over residues 341–375 and 393–409; these read QSPP…GLLP and PVPP…PPPT. The span at 416 to 434 shows a compositional bias: low complexity; sequence PSGAATTTAAGTSTSAPAP. Pro residues predominate over residues 435–449; it reads GSVPGPEAGPAPGFP. Residues 474-529 are HAF-H domain; necessary to form higher-order Hrd1 complexes; it reads GFAGLTPEELRALEGHERQHLEARLQSLRNIHTLLDAAMLQINQYLTVLASLGPPR. The tract at residues 530–612 is disordered; it reads PATSVNPTEE…LQKLESPVAH (83 aa). Over residues 539–559 the composition is skewed to low complexity; it reads ETASTVVSAAPSTSAPSSEAP. The segment covering 560–570 has biased composition (pro residues); that stretch reads TPSPGASPPIP. Positions 586-595 are enriched in acidic residues; the sequence is ELPEDGEPDA. S608 bears the Phosphoserine mark.

This sequence belongs to the HRD1 family. As to quaternary structure, homodimer. Interacts with p53/TP53. Interacts with HTT. Component of the HRD1 complex, which comprises at least SYNV1/HRD1, DERL1/2, FAM8A1, HERPUD1/HERP, OS9, SEL1L and UBE2J1. FAM8A1 is stabilized by interaction with SYNV1, which prevents its proteasomal degradation. OS9 and UBE2J1 recruitment to the complex may be mediated by SEL1L. SYNV1 assembles with SEL1L and FAM8A1 through its transmembrane domains, but interaction with its cytoplasmic domain is required to confer stability to FAM8A1 and enhance recruitment of HERPUD1. The HRD1 complex also associates with VIMP and may transfer misfolded proteins from the endoplasmic reticulum to VCP. May form a complex with ERLEC1; HSPA5; OS9 and SEL1L. Interacts with VCP. Interacts with UBXN6. Interacts with BAG6. Interacts with NFE2L1. Interacts (via N-terminus) with components of the pre-B cell receptor, including IGLL1 and VPREB1A. Interacts with CREB3L3; this interaction leads to CREB3L3 ubiquitination and proteasomal degradation. Post-translationally, auto-ubiquitinated. Deubiquitinated by USP19. Widely expressed, with highest levels in bone, spleen, lung and testis. In the brain, present in neurons but not in glial cells. Up-regulated in synovial tissues from mice with collagen-induced arthritis (at protein level). Expressed in the liver.

The protein localises to the endoplasmic reticulum membrane. The catalysed reaction is S-ubiquitinyl-[E2 ubiquitin-conjugating enzyme]-L-cysteine + [acceptor protein]-L-lysine = [E2 ubiquitin-conjugating enzyme]-L-cysteine + N(6)-ubiquitinyl-[acceptor protein]-L-lysine.. Its pathway is protein modification; protein ubiquitination. Its function is as follows. E3 ubiquitin-protein ligase which accepts ubiquitin specifically from endoplasmic reticulum-associated UBC7 E2 ligase and transfers it to substrates, promoting their degradation. Component of the endoplasmic reticulum quality control (ERQC) system also called ER-associated degradation (ERAD) involved in ubiquitin-dependent degradation of misfolded endoplasmic reticulum proteins. Also promotes the degradation of normal but naturally short-lived proteins such as SGK. Protects cells from ER stress-induced apoptosis. Sequesters p53/TP53 in the cytoplasm and promotes its degradation, thereby negatively regulating its biological function in transcription, cell cycle regulation and apoptosis. Required for embryogenesis. Mediates the ubiquitination and subsequent degradation of cytoplasmic NFE2L1. During the early stage of B cell development, required for degradation of the pre-B cell receptor (pre-BCR) complex, hence supporting further differentiation into mature B cells. The protein is E3 ubiquitin-protein ligase synoviolin (Syvn1) of Mus musculus (Mouse).